We begin with the raw amino-acid sequence, 239 residues long: MGNSALRAHVETAQKTGVFQLKDRGLTEFPSELQKLTSNLRTIDLSNNKIDSLPPLIIGKFTLLKSLSLNNNKLTVLPDELCNLKKLETLSLNNNHLRELPSTFGQLSALKTLSLSGNQLGALPPQLCCLRHLDVVDLSKNQIRSIPDTVGELQAIELNLNQNQISQLSVKISCCPRLKVLRLEENCLELSMLPQSILSDSQICLLAVEGNLFEIKKFRELEGYDKYMERFTATKKKFA.

G2 carries N-myristoyl glycine lipidation. 8 LRR repeats span residues 39–60, 63–85, 86–107, 109–130, 132–153, 154–175, 177–197, and 202–222; these read NLRTIDLSNNKIDSLPPLIIGK, LLKSLSLNNNKLTVLPDELCNLK, KLETLSLNNNHLRELPSTFGQL, ALKTLSLSGNQLGALPPQLCCL, HLDVVDLSKNQIRSIPDTVGEL, QAIELNLNQNQISQLSVKISCC, RLKVLRLEENCLELSMLPQSI, and QICLLAVEGNLFEIKKFRELE.

The protein localises to the membrane. The chain is Leucine-rich repeat-containing protein 57 (Lrrc57) from Mus musculus (Mouse).